The primary structure comprises 99 residues: Small ribosomal subunit protein bS20 (99 aa).

This sequence belongs to the bacterial ribosomal protein bS20 family.

Its function is as follows. Binds directly to 16S ribosomal RNA. The protein is Small ribosomal subunit protein bS20 of Picosynechococcus sp. (strain ATCC 27264 / PCC 7002 / PR-6) (Agmenellum quadruplicatum).